A 1501-amino-acid polypeptide reads, in one-letter code: 1-phosphatidylinositol 4,5-bisphosphate phosphodiesterase eta-2 (1501 aa).

Residues 28 to 47 are disordered; it reads RGFSGLQGGRRRGRGEKGIP. The interval 75–229 is necessary for plasma membrane localization; sequence MPGPQPSAAS…WVTGLRYLMA (155 aa). One can recognise a PH domain in the interval 121–229; that stretch reads SAMQEGTQMV…WVTGLRYLMA (109 aa). EF-hand domains follow at residues 243-278 and 279-315; these read TRDQ…LNVN and LPRQ…MSTR. Residues D256, N258, D260, S262, and E267 each contribute to the Ca(2+) site. The region spanning 400–545 is the PI-PLC X-box domain; sequence QDMTQPLSHY…LKGKILVKGK (146 aa). The active site involves H415. N416, E445, and D447 together coordinate Ca(2+). The active site involves H459. E494 serves as a coordination point for Ca(2+). Residues K543 and K545 each coordinate substrate. Disordered stretches follow at residues 551-570 and 609-700; these read ISED…DEME and DPND…QKKT. Residues 553 to 570 are compositionally biased toward acidic residues; that stretch reads EDAEEGEVSDEDSADEME. Phosphoserine occurs at positions 561 and 565. The segment covering 626–638 has biased composition (basic and acidic residues); the sequence is RKAEAKKGQSKVE. Positions 662–673 are enriched in basic residues; that stretch reads SKRKKKGSKIKK. 2 positions are modified to phosphoserine: S676 and S686. Residues 707–821 form the PI-PLC Y-box domain; the sequence is LSDLVKYTKS…GYVLKPQCMC (115 aa). Substrate contacts are provided by S734 and R761. In terms of domain architecture, C2 spans 821–950; the sequence is CQGVFNPNSE…PGYRHVYLEG (130 aa). Ca(2+)-binding residues include I865, D867, D891, D920, H921, and D922. Disordered stretches follow at residues 986-1073, 1089-1238, 1273-1305, and 1398-1469; these read GSLD…RLFP, EEPA…SSND, SAAR…DELQ, and GDIT…GACS. A compositionally biased stretch (low complexity) spans 1089–1107; the sequence is EEPALGPGLPLQAAAPTGP. 2 stretches are compositionally biased toward basic and acidic residues: residues 1142 to 1151 and 1215 to 1227; these read GGRENEEPPL and LWQR…HRDS. The segment covering 1421–1439 has biased composition (low complexity); the sequence is RRSSSRSQSRVRAIASRAR. Residues 1440 to 1463 are compositionally biased toward basic and acidic residues; it reads QAQERQQRLRGQDSRGPPEEERGT.

Ca(2+) is required as a cofactor. As to expression, specifically detected in the brain, with higher level in cerebral cortex, olfactory bulb and hippocampus (at protein level). Expressed in the pyramidal cells of the hippocampus, but also in eye and lung.

The protein localises to the cytoplasm. It is found in the cell membrane. The catalysed reaction is a 1,2-diacyl-sn-glycero-3-phospho-(1D-myo-inositol-4,5-bisphosphate) + H2O = 1D-myo-inositol 1,4,5-trisphosphate + a 1,2-diacyl-sn-glycerol + H(+). With respect to regulation, activity is stimulated by GNB1:GNG2. The production of the second messenger molecules diacylglycerol (DAG) and inositol 1,4,5-trisphosphate (IP3) is mediated by activated phosphatidylinositol-specific phospholipase C enzymes. This phospholipase activity is very sensitive to calcium. May be important for formation and maintenance of the neuronal network in the postnatal brain. The polypeptide is 1-phosphatidylinositol 4,5-bisphosphate phosphodiesterase eta-2 (Mus musculus (Mouse)).